The chain runs to 361 residues: MSGNTIGTLFTLTSFGESHGPAIGGVVDGCPPGLELSVEDIQQELDRRKPGTSRHVTQRKEPDTVEILSGVFEGRTTGTPIGLLIRNQDQRSQDYGKIAETFRPGHADYTYWQKYGIRDYRGGGRSSARETAVRVAAGAIAKKWLKQRYGVTIRGCMSQLGDIQIPFESWDAVSRNAFFAPNETILPELEAYLDRIRSERDSVGAKITVVAEGVPVGWGEPVYDRLDADIAHAMMGINAAKGVEIGDGFASVAQRGSVHGDELTPQGFASNHAGGILGGISSGQDIIAHVAFKPTSSIPQLRHSIDKHGAALEMQTTGRHDPCVGVRATPIVEAMMALVLMDHALRHRAQNADVSVDTVKR.

Arginine 48 and arginine 54 together coordinate NADP(+). FMN-binding positions include 125–127 (RSS), 238–239 (NA), glycine 278, 293–297 (KPTSS), and arginine 319.

This sequence belongs to the chorismate synthase family. In terms of assembly, homotetramer. FMNH2 is required as a cofactor.

The enzyme catalyses 5-O-(1-carboxyvinyl)-3-phosphoshikimate = chorismate + phosphate. It functions in the pathway metabolic intermediate biosynthesis; chorismate biosynthesis; chorismate from D-erythrose 4-phosphate and phosphoenolpyruvate: step 7/7. Functionally, catalyzes the anti-1,4-elimination of the C-3 phosphate and the C-6 proR hydrogen from 5-enolpyruvylshikimate-3-phosphate (EPSP) to yield chorismate, which is the branch point compound that serves as the starting substrate for the three terminal pathways of aromatic amino acid biosynthesis. This reaction introduces a second double bond into the aromatic ring system. This chain is Chorismate synthase, found in Methylobacillus flagellatus (strain ATCC 51484 / DSM 6875 / VKM B-1610 / KT).